The chain runs to 209 residues: Casparian strip membrane protein 1 (209 aa).

Over 1–46 (MEKSESTKIDVVETNKERKGKAPLLGKAPVVAAAVVHAKGGGAKRG) the chain is Cytoplasmic. A helical membrane pass occupies residues 47–67 (IAIFDLILRIAAFASALGAAV). The Extracellular portion of the chain corresponds to 68 to 96 (AMATTEETLPFFTQFFQFEASYDDLPTFT). Residues 97 to 117 (FFVVAMAIVVAYLVLSVPFSI) traverse the membrane as a helical segment. The Cytoplasmic portion of the chain corresponds to 118 to 129 (VCIVRPHAVVPR). A helical transmembrane segment spans residues 130–150 (LLLIIFDTVIIALTTGAAGSS). Residues 151–179 (AAIVYLAHNGNQDANWLAICQQFGDFCQR) are Extracellular-facing. The chain crosses the membrane as a helical span at residues 180–200 (VSGAVVAAFVTVVILIFLVVL). Residues 201–209 (SASALRRHH) are Cytoplasmic-facing.

This sequence belongs to the Casparian strip membrane proteins (CASP) family. As to quaternary structure, homodimer and heterodimers.

The protein resides in the cell membrane. Regulates membrane-cell wall junctions and localized cell wall deposition. Required for establishment of the Casparian strip membrane domain (CSD) and the subsequent formation of Casparian strips, a cell wall modification of the root endodermis that determines an apoplastic barrier between the intraorganismal apoplasm and the extraorganismal apoplasm and prevents lateral diffusion. The chain is Casparian strip membrane protein 1 from Nicotiana tabacum (Common tobacco).